The primary structure comprises 78 residues: Large ribosomal subunit protein bL28 (78 aa).

A disordered region spans residues methionine 1–alanine 21.

It belongs to the bacterial ribosomal protein bL28 family.

The chain is Large ribosomal subunit protein bL28 from Yersinia enterocolitica serotype O:8 / biotype 1B (strain NCTC 13174 / 8081).